Here is a 1062-residue protein sequence, read N- to C-terminus: Carbamoyl phosphate synthase large chain (1062 aa).

The tract at residues 1–401 (MPKRTDIHKI…AMQKAVQSLE (401 aa)) is carboxyphosphate synthetic domain. The ATP site is built by R129, R169, G175, G176, K208, I210, E215, G241, I242, H243, Q284, and E298. The 195-residue stretch at 133–327 (KELCQKLGEP…IAKMAAKIAI (195 aa)) folds into the ATP-grasp 1 domain. Mg(2+)-binding residues include Q284, E298, and N300. Mn(2+) is bound by residues Q284, E298, and N300. The oligomerization domain stretch occupies residues 402–546 (IDEKDLYSAK…YSTYDGENES (145 aa)). The carbamoyl phosphate synthetic domain stretch occupies residues 547 to 929 (RKSGKKSVIV…ALYKAFAGAK (383 aa)). The ATP-grasp 2 domain occupies 671 to 861 (DQIIKSLHLH…MAQVATRVIM (191 aa)). Positions 707, 746, 748, 752, 777, 778, 779, 780, 820, and 832 each coordinate ATP. Q820, E832, and N834 together coordinate Mg(2+). 3 residues coordinate Mn(2+): Q820, E832, and N834. Residues 930-1062 (MQLPENGNVL…NRSFATDALK (133 aa)) enclose the MGS-like domain. The allosteric domain stretch occupies residues 930 to 1062 (MQLPENGNVL…NRSFATDALK (133 aa)).

It belongs to the CarB family. As to quaternary structure, composed of two chains; the small (or glutamine) chain promotes the hydrolysis of glutamine to ammonia, which is used by the large (or ammonia) chain to synthesize carbamoyl phosphate. Tetramer of heterodimers (alpha,beta)4. Requires Mg(2+) as cofactor. It depends on Mn(2+) as a cofactor.

It catalyses the reaction hydrogencarbonate + L-glutamine + 2 ATP + H2O = carbamoyl phosphate + L-glutamate + 2 ADP + phosphate + 2 H(+). The catalysed reaction is hydrogencarbonate + NH4(+) + 2 ATP = carbamoyl phosphate + 2 ADP + phosphate + 2 H(+). It functions in the pathway amino-acid biosynthesis; L-arginine biosynthesis; carbamoyl phosphate from bicarbonate: step 1/1. The protein operates within pyrimidine metabolism; UMP biosynthesis via de novo pathway; (S)-dihydroorotate from bicarbonate: step 1/3. Its function is as follows. Large subunit of the glutamine-dependent carbamoyl phosphate synthetase (CPSase). CPSase catalyzes the formation of carbamoyl phosphate from the ammonia moiety of glutamine, carbonate, and phosphate donated by ATP, constituting the first step of 2 biosynthetic pathways, one leading to arginine and/or urea and the other to pyrimidine nucleotides. The large subunit (synthetase) binds the substrates ammonia (free or transferred from glutamine from the small subunit), hydrogencarbonate and ATP and carries out an ATP-coupled ligase reaction, activating hydrogencarbonate by forming carboxy phosphate which reacts with ammonia to form carbamoyl phosphate. The sequence is that of Carbamoyl phosphate synthase large chain from Lactobacillus delbrueckii subsp. bulgaricus (strain ATCC BAA-365 / Lb-18).